A 205-amino-acid chain; its full sequence is Golgi apparatus membrane protein TVP23 homolog B (205 aa).

Met-1 carries the N-acetylmethionine modification. The interval 1-21 (MLQQDSNDDTEDVSLFDAEEE) is disordered. 4 consecutive transmembrane segments (helical) span residues 34–53 (PVAS…VYLL), 54–72 (CGLL…ILLL), 126–146 (IFWL…FSAL), and 152–172 (KWLA…YGYI).

Belongs to the TVP23 family.

Its subcellular location is the membrane. The chain is Golgi apparatus membrane protein TVP23 homolog B (TVP23B) from Homo sapiens (Human).